Here is a 327-residue protein sequence, read N- to C-terminus: GMP reductase (327 aa).

The Thioimidate intermediate role is filled by C176. Position 205–228 (205–228 (IIADGGIRTHGDIAKSIRFGASMV)) interacts with NADP(+).

This sequence belongs to the IMPDH/GMPR family. GuaC type 2 subfamily.

The enzyme catalyses IMP + NH4(+) + NADP(+) = GMP + NADPH + 2 H(+). In terms of biological role, catalyzes the irreversible NADPH-dependent deamination of GMP to IMP. It functions in the conversion of nucleobase, nucleoside and nucleotide derivatives of G to A nucleotides, and in maintaining the intracellular balance of A and G nucleotides. This chain is GMP reductase, found in Streptococcus agalactiae serotype Ia (strain ATCC 27591 / A909 / CDC SS700).